The following is a 150-amino-acid chain: Ribosomal RNA large subunit methyltransferase H (150 aa).

S-adenosyl-L-methionine contacts are provided by residues Leu-68, Gly-97, and 116 to 121 (LSAMTL).

Belongs to the RNA methyltransferase RlmH family. In terms of assembly, homodimer.

It is found in the cytoplasm. The enzyme catalyses pseudouridine(1915) in 23S rRNA + S-adenosyl-L-methionine = N(3)-methylpseudouridine(1915) in 23S rRNA + S-adenosyl-L-homocysteine + H(+). Its function is as follows. Specifically methylates the pseudouridine at position 1915 (m3Psi1915) in 23S rRNA. The sequence is that of Ribosomal RNA large subunit methyltransferase H from Prochlorococcus marinus (strain MIT 9303).